A 186-amino-acid polypeptide reads, in one-letter code: Adenine phosphoribosyltransferase (186 aa).

Belongs to the purine/pyrimidine phosphoribosyltransferase family. In terms of assembly, homodimer.

It localises to the cytoplasm. It carries out the reaction AMP + diphosphate = 5-phospho-alpha-D-ribose 1-diphosphate + adenine. Its pathway is purine metabolism; AMP biosynthesis via salvage pathway; AMP from adenine: step 1/1. Its function is as follows. Catalyzes a salvage reaction resulting in the formation of AMP, that is energically less costly than de novo synthesis. The sequence is that of Adenine phosphoribosyltransferase from Xanthomonas oryzae pv. oryzae (strain MAFF 311018).